We begin with the raw amino-acid sequence, 367 residues long: 3-dehydroquinate synthase (367 aa).

Residues 112-116 (GVIGD), 136-137 (TT), lysine 149, lysine 158, and 176-179 (TLKT) each bind NAD(+). Zn(2+) contacts are provided by glutamate 191, histidine 256, and histidine 273.

It belongs to the sugar phosphate cyclases superfamily. Dehydroquinate synthase family. NAD(+) is required as a cofactor. It depends on Co(2+) as a cofactor. Zn(2+) serves as cofactor.

It is found in the cytoplasm. The catalysed reaction is 7-phospho-2-dehydro-3-deoxy-D-arabino-heptonate = 3-dehydroquinate + phosphate. It participates in metabolic intermediate biosynthesis; chorismate biosynthesis; chorismate from D-erythrose 4-phosphate and phosphoenolpyruvate: step 2/7. Its function is as follows. Catalyzes the conversion of 3-deoxy-D-arabino-heptulosonate 7-phosphate (DAHP) to dehydroquinate (DHQ). In Prochlorococcus marinus (strain SARG / CCMP1375 / SS120), this protein is 3-dehydroquinate synthase.